The sequence spans 143 residues: Putative complexin-1 (143 aa).

A disordered region spans residues glutamate 16–tyrosine 72. Basic and acidic residues-rich tracts occupy residues methionine 23–threonine 33 and leucine 44–tyrosine 72. The stretch at isoleucine 40–lysine 71 forms a coiled coil.

It belongs to the complexin/synaphin family.

Its subcellular location is the cytoplasm. It is found in the cytosol. In terms of biological role, positively regulates a late step in synaptic vesicle exocytosis. The chain is Putative complexin-1 (cpx-1) from Caenorhabditis elegans.